A 216-amino-acid chain; its full sequence is Co-chaperone protein SBA1 (216 aa).

Ser-2 carries the post-translational modification N-acetylserine. In terms of domain architecture, CS spans 5–108; the sequence is VINPQVAWAQ…LESEYWPRLT (104 aa). 2 consecutive repeats follow at residues 141 to 156 and 160 to 174; these read AQGM…AGGA and GGMD…AGGA. The disordered stretch occupies residues 169 to 216; that stretch reads GGAGGAGSPDMAQLQQLLAQSGGNLDMGDFKENDEEDEEEEIEPEVKA. Residues 200–216 are compositionally biased toward acidic residues; that stretch reads ENDEEDEEEEIEPEVKA.

It belongs to the p23/wos2 family. In terms of assembly, interacts with HSP82.

Its function is as follows. Acts as a co-chaperone. The chain is Co-chaperone protein SBA1 (SBA1) from Saccharomyces cerevisiae (strain ATCC 204508 / S288c) (Baker's yeast).